A 398-amino-acid chain; its full sequence is MAQVINEMDVPSHSFVFHGTGERYFLICVVNVLLTIITLGIYLPWALMKCKRYLYANMEVNGQRFSYGITGGNVFVSCLFFVFFYFAILMTVSADMPLVGCVLTLLLLVLLIFMAAKGLRHQALMTSLNGVRFSFNCSMKGFWWVTFFLPILMAIGMGTVFFISTKMLPANSSSSVIISMVLMAIVGIVSIGIFNGTLYSLVMSFLWSNTSFGIHRFKVKLDTTYCIKYAILAFLALLPFLAVAGYIIFDQILNAYDSSVYANDDIENLQQFMEMQRKMIIAQLIYYFGIAVSTSYLTVSLRNHFMSNLSLNDGRIRFRLTLTYHGMLYRMCALVVISGITGGLAYPLLKIWMIDWQAKNTYLLGDLDDLPLINKEEQPDKGFLASISRGVMPSLPFL.

Over 1 to 24 (MAQVINEMDVPSHSFVFHGTGERY) the chain is Cytoplasmic. Residues 25 to 45 (FLICVVNVLLTIITLGIYLPW) traverse the membrane as a helical segment. Topologically, residues 46–73 (ALMKCKRYLYANMEVNGQRFSYGITGGN) are periplasmic. A helical transmembrane segment spans residues 74–94 (VFVSCLFFVFFYFAILMTVSA). Asp95 is a topological domain (cytoplasmic). A helical membrane pass occupies residues 96-116 (MPLVGCVLTLLLLVLLIFMAA). Residues 117 to 142 (KGLRHQALMTSLNGVRFSFNCSMKGF) lie on the Periplasmic side of the membrane. A helical membrane pass occupies residues 143–163 (WWVTFFLPILMAIGMGTVFFI). Topologically, residues 164–175 (STKMLPANSSSS) are cytoplasmic. The helical transmembrane segment at 176-196 (VIISMVLMAIVGIVSIGIFNG) threads the bilayer. Residues 197–228 (TLYSLVMSFLWSNTSFGIHRFKVKLDTTYCIK) lie on the Periplasmic side of the membrane. Residues 229–249 (YAILAFLALLPFLAVAGYIIF) form a helical membrane-spanning segment. Topologically, residues 250-278 (DQILNAYDSSVYANDDIENLQQFMEMQRK) are cytoplasmic. The helical transmembrane segment at 279 to 299 (MIIAQLIYYFGIAVSTSYLTV) threads the bilayer. Over 300 to 333 (SLRNHFMSNLSLNDGRIRFRLTLTYHGMLYRMCA) the chain is Periplasmic. Residues 334-354 (LVVISGITGGLAYPLLKIWMI) traverse the membrane as a helical segment. Residues 355-398 (DWQAKNTYLLGDLDDLPLINKEEQPDKGFLASISRGVMPSLPFL) are Cytoplasmic-facing.

The protein resides in the cell inner membrane. This is Inner membrane protein YjgN (yjgN) from Escherichia coli (strain K12).